Consider the following 1404-residue polypeptide: DNA-directed RNA polymerase subunit beta' (1404 aa).

Residues C72, C74, C87, and C90 each coordinate Zn(2+). Residues D463, D465, and D467 each contribute to the Mg(2+) site. Residues C811, C885, C892, and C895 each coordinate Zn(2+).

The protein belongs to the RNA polymerase beta' chain family. As to quaternary structure, the RNAP catalytic core consists of 2 alpha, 1 beta, 1 beta' and 1 omega subunit. When a sigma factor is associated with the core the holoenzyme is formed, which can initiate transcription. Mg(2+) serves as cofactor. It depends on Zn(2+) as a cofactor.

It catalyses the reaction RNA(n) + a ribonucleoside 5'-triphosphate = RNA(n+1) + diphosphate. In terms of biological role, DNA-dependent RNA polymerase catalyzes the transcription of DNA into RNA using the four ribonucleoside triphosphates as substrates. The chain is DNA-directed RNA polymerase subunit beta' from Jannaschia sp. (strain CCS1).